The primary structure comprises 396 residues: Elongation factor Tu (396 aa).

The tr-type G domain maps to 10–205 (KPHVNIGTIG…AVDESIPDPV (196 aa)). Residues 19–26 (GHVDHGKT) are G1. GTP is bound at residue 19–26 (GHVDHGKT). A Mg(2+)-binding site is contributed by Thr26. Residues 62–66 (GITIN) are G2. Residues 83–86 (DAPG) are G3. Residues 83–87 (DAPGH) and 138–141 (NKAD) contribute to the GTP site. Residues 138 to 141 (NKAD) form a G4 region. Residues 175–177 (SAL) are G5.

This sequence belongs to the TRAFAC class translation factor GTPase superfamily. Classic translation factor GTPase family. EF-Tu/EF-1A subfamily. In terms of assembly, monomer.

It localises to the cytoplasm. It carries out the reaction GTP + H2O = GDP + phosphate + H(+). GTP hydrolase that promotes the GTP-dependent binding of aminoacyl-tRNA to the A-site of ribosomes during protein biosynthesis. This is Elongation factor Tu from Mycolicibacterium gilvum (strain PYR-GCK) (Mycobacterium gilvum (strain PYR-GCK)).